The primary structure comprises 267 residues: Tryptophan synthase alpha chain (267 aa).

Residues Glu-49 and Asp-60 each act as proton acceptor in the active site.

Belongs to the TrpA family. Tetramer of two alpha and two beta chains.

The enzyme catalyses (1S,2R)-1-C-(indol-3-yl)glycerol 3-phosphate + L-serine = D-glyceraldehyde 3-phosphate + L-tryptophan + H2O. Its pathway is amino-acid biosynthesis; L-tryptophan biosynthesis; L-tryptophan from chorismate: step 5/5. Functionally, the alpha subunit is responsible for the aldol cleavage of indoleglycerol phosphate to indole and glyceraldehyde 3-phosphate. The protein is Tryptophan synthase alpha chain of Salinispora tropica (strain ATCC BAA-916 / DSM 44818 / JCM 13857 / NBRC 105044 / CNB-440).